A 576-amino-acid polypeptide reads, in one-letter code: Proline--tRNA ligase (576 aa).

It belongs to the class-II aminoacyl-tRNA synthetase family. ProS type 1 subfamily. In terms of assembly, homodimer.

The protein localises to the cytoplasm. The enzyme catalyses tRNA(Pro) + L-proline + ATP = L-prolyl-tRNA(Pro) + AMP + diphosphate. Its function is as follows. Catalyzes the attachment of proline to tRNA(Pro) in a two-step reaction: proline is first activated by ATP to form Pro-AMP and then transferred to the acceptor end of tRNA(Pro). As ProRS can inadvertently accommodate and process non-cognate amino acids such as alanine and cysteine, to avoid such errors it has two additional distinct editing activities against alanine. One activity is designated as 'pretransfer' editing and involves the tRNA(Pro)-independent hydrolysis of activated Ala-AMP. The other activity is designated 'posttransfer' editing and involves deacylation of mischarged Ala-tRNA(Pro). The misacylated Cys-tRNA(Pro) is not edited by ProRS. This is Proline--tRNA ligase from Bordetella petrii (strain ATCC BAA-461 / DSM 12804 / CCUG 43448).